We begin with the raw amino-acid sequence, 171 residues long: Large ribosomal subunit protein bL9 (171 aa).

Belongs to the bacterial ribosomal protein bL9 family.

Its function is as follows. Binds to the 23S rRNA. The chain is Large ribosomal subunit protein bL9 from Orientia tsutsugamushi (strain Ikeda) (Rickettsia tsutsugamushi).